A 729-amino-acid polypeptide reads, in one-letter code: Neurochondrin (729 aa).

S2 carries the post-translational modification N-acetylserine. S2 carries the post-translational modification Phosphoserine. S2 bears the N-acetylalanine mark. Residues C3 and C4 are each lipidated (S-palmitoyl cysteine). R75 is subject to Asymmetric dimethylarginine. A Phosphoserine modification is found at S448.

Belongs to the neurochondrin family. In terms of assembly, interacts with MCHR1. Interacts with SEMA4C. Interacts with DIAPH1 (via FH3 domain). Interacts with GRM5. In terms of processing, palmitoylated. Palmitoylation by ZDHHC1, ZDHHC3 and ZDHHC11 regulates the association of NCDN with endosome membranes. May also be palmitoylated by ZDHHC7. In terms of tissue distribution, abundantly expressed in whole adult brain and in all individual brain regions examined, including spinal cord. Weakly expressed in ovary, testis, fetal brain and small intestine.

It is found in the cytoplasm. The protein resides in the cytosol. The protein localises to the endosome membrane. Its subcellular location is the cell projection. It localises to the dendrite. It is found in the postsynapse. Its function is as follows. Probably involved in signal transduction in the nervous system, via increasing cell surface localization of GRM5/mGluR5 and positively regulating its signaling. Required for the spatial learning process. Acts as a negative regulator of Ca(2+)-calmodulin-dependent protein kinase 2 (CaMK2) phosphorylation. May play a role in modulating melanin-concentrating hormone-mediated functions via its interaction with MCHR1 that interferes with G protein-coupled signal transduction. May be involved in bone metabolism. May also be involved in neurite outgrowth. The sequence is that of Neurochondrin from Homo sapiens (Human).